The primary structure comprises 165 residues: Large ribosomal subunit protein uL10 (165 aa).

This sequence belongs to the universal ribosomal protein uL10 family. Part of the ribosomal stalk of the 50S ribosomal subunit. The N-terminus interacts with L11 and the large rRNA to form the base of the stalk. The C-terminus forms an elongated spine to which L12 dimers bind in a sequential fashion forming a multimeric L10(L12)X complex.

Its function is as follows. Forms part of the ribosomal stalk, playing a central role in the interaction of the ribosome with GTP-bound translation factors. This chain is Large ribosomal subunit protein uL10, found in Enterobacter sp. (strain 638).